The primary structure comprises 751 residues: Phosphoribosylformylglycinamidine synthase subunit PurL (751 aa).

The active site involves H54. The ATP site is built by Y57 and K106. E108 contributes to the Mg(2+) binding site. Substrate is bound by residues 109–112 (SHNH) and R131. The active-site Proton acceptor is the H110. Residue D132 participates in Mg(2+) binding. Q256 contributes to the substrate binding site. D284 lines the Mg(2+) pocket. A substrate-binding site is contributed by 328 to 330 (ESQ). Residues D516 and G553 each coordinate ATP. Mg(2+) is bound at residue N554. S556 is a binding site for substrate.

This sequence belongs to the FGAMS family. Monomer. Part of the FGAM synthase complex composed of 1 PurL, 1 PurQ and 2 PurS subunits.

The protein resides in the cytoplasm. It carries out the reaction N(2)-formyl-N(1)-(5-phospho-beta-D-ribosyl)glycinamide + L-glutamine + ATP + H2O = 2-formamido-N(1)-(5-O-phospho-beta-D-ribosyl)acetamidine + L-glutamate + ADP + phosphate + H(+). Its pathway is purine metabolism; IMP biosynthesis via de novo pathway; 5-amino-1-(5-phospho-D-ribosyl)imidazole from N(2)-formyl-N(1)-(5-phospho-D-ribosyl)glycinamide: step 1/2. Part of the phosphoribosylformylglycinamidine synthase complex involved in the purines biosynthetic pathway. Catalyzes the ATP-dependent conversion of formylglycinamide ribonucleotide (FGAR) and glutamine to yield formylglycinamidine ribonucleotide (FGAM) and glutamate. The FGAM synthase complex is composed of three subunits. PurQ produces an ammonia molecule by converting glutamine to glutamate. PurL transfers the ammonia molecule to FGAR to form FGAM in an ATP-dependent manner. PurS interacts with PurQ and PurL and is thought to assist in the transfer of the ammonia molecule from PurQ to PurL. The sequence is that of Phosphoribosylformylglycinamidine synthase subunit PurL from Nocardioides sp. (strain ATCC BAA-499 / JS614).